We begin with the raw amino-acid sequence, 123 residues long: Small ribosomal subunit protein uS12cz/uS12cy (123 aa).

Belongs to the universal ribosomal protein uS12 family. Part of the 30S ribosomal subunit.

Its subcellular location is the plastid. It localises to the chloroplast. In terms of biological role, with S4 and S5 plays an important role in translational accuracy. Located at the interface of the 30S and 50S subunits. This is Small ribosomal subunit protein uS12cz/uS12cy (rps12-A) from Populus alba (White poplar).